The following is a 168-amino-acid chain: G/U mismatch-specific DNA glycosylase (168 aa).

The protein belongs to the uracil-DNA glycosylase (UDG) superfamily. TDG/mug family. As to quaternary structure, binds DNA as a monomer.

Its subcellular location is the cytoplasm. It carries out the reaction Specifically hydrolyzes mismatched double-stranded DNA and polynucleotides, releasing free uracil.. In terms of biological role, excises ethenocytosine and uracil, which can arise by alkylation or deamination of cytosine, respectively, from the corresponding mispairs with guanine in ds-DNA. It is capable of hydrolyzing the carbon-nitrogen bond between the sugar-phosphate backbone of the DNA and the mispaired base. The complementary strand guanine functions in substrate recognition. Required for DNA damage lesion repair in stationary-phase cells. The chain is G/U mismatch-specific DNA glycosylase from Salmonella agona (strain SL483).